We begin with the raw amino-acid sequence, 116 residues long: Prefoldin subunit beta (116 aa).

Belongs to the prefoldin subunit beta family. In terms of assembly, heterohexamer of two alpha and four beta subunits.

Its subcellular location is the cytoplasm. Its function is as follows. Molecular chaperone capable of stabilizing a range of proteins. Seems to fulfill an ATP-independent, HSP70-like function in archaeal de novo protein folding. The polypeptide is Prefoldin subunit beta (Methanobrevibacter smithii (strain ATCC 35061 / DSM 861 / OCM 144 / PS)).